Consider the following 323-residue polypeptide: Aldo-keto reductase family 1 member C23-like protein (323 aa).

20–24 is an NADP(+) binding site; sequence GFGTY. Lysine 31 is a substrate binding site. Residue aspartate 50 participates in NADP(+) binding. Tyrosine 55 (proton donor) is an active-site residue. Histidine 117 contributes to the substrate binding site. Residues 166–167, glutamine 190, 216–222, and 270–280 each bind NADP(+); these read SN, YGALGTQ, and KSYNEKRIKEN.

Belongs to the aldo/keto reductase family. Monomer. In terms of tissue distribution, detected in endometrium surface epithelium (at protein level). Detected in endometrium.

The protein localises to the cytoplasm. In terms of biological role, NADP-dependent oxidoreductase involved in steroid metabolism. May act on various hydroxysteroids. The polypeptide is Aldo-keto reductase family 1 member C23-like protein (PGFS) (Equus caballus (Horse)).